Consider the following 609-residue polypeptide: Glutamine--fructose-6-phosphate aminotransferase [isomerizing] (609 aa).

The active-site Nucleophile; for GATase activity is cysteine 2. A Glutamine amidotransferase type-2 domain is found at 2–218 (CGIVGAIAQR…EGDIAEITRR (217 aa)). SIS domains lie at 286-426 (ADDL…LKGL) and 458-599 (LAED…VDQP). Lysine 604 acts as the For Fru-6P isomerization activity in catalysis.

In terms of assembly, homodimer.

The protein resides in the cytoplasm. It catalyses the reaction D-fructose 6-phosphate + L-glutamine = D-glucosamine 6-phosphate + L-glutamate. Catalyzes the first step in hexosamine metabolism, converting fructose-6P into glucosamine-6P using glutamine as a nitrogen source. The chain is Glutamine--fructose-6-phosphate aminotransferase [isomerizing] from Salmonella typhi.